A 326-amino-acid polypeptide reads, in one-letter code: dTDP-4-dehydro-6-deoxy-D-allose reductase (326 aa).

NAD(+) is bound by residues 15 to 21 and 129 to 132; these read GALGFIG and MSSS. The Proton donor/acceptor role is filled by Tyr160. NAD(+)-binding positions include Lys164 and 187–190; that span reads PGNV.

This sequence belongs to the NAD(P)-dependent epimerase/dehydratase family.

The catalysed reaction is dTDP-6-deoxy-alpha-D-allose + NAD(+) = dTDP-4-dehydro-6-deoxy-alpha-D-allose + NADH + H(+). It catalyses the reaction dTDP-6-deoxy-alpha-D-allose + NADP(+) = dTDP-4-dehydro-6-deoxy-alpha-D-allose + NADPH + H(+). Catalyzes the stereospecific reduction of the C-4 keto group of dTDP-4-dehydro-6-deoxy-D-allose, leading to dTDP-6-deoxy-D-allose, an intermediate in the biosynthesis of the mycinose moiety of dihydrochalcomycin (GERI-155) antibiotic. Cannot directly reduce dTDP-4-dehydro-6-deoxyglucose, and thus acts after the epimerization step catalyzed by GerF. The polypeptide is dTDP-4-dehydro-6-deoxy-D-allose reductase (gerKI) (Streptomyces sp).